The primary structure comprises 331 residues: MNLKNRHFLKLLDFTPEEITAYLDLAAELKAAKKAGREIQRMKGKNIALIFEKTSTRTRCAFEVAARDQGAGVTYLEPSASQIGHKESIKDTARVLGRMYDGIEYRGFAQETVEELTKYAGVPVFNGLTNEFHPTQMLADALTMREHSGKPLNQTAFAYVGDARYNMGNSLLILGAKLGMDVRIGAPQSLWPSEGIIAAAHAAAKETGAKITLTENAHEAVKNVDFIHTDVWVSMGEPKEVWQERIDLLKDYRVTPELMAASGNPQVKFMHCLPAFHNRETKVGEWIYETFGLNGVEVTEEVFESPASIVFDQAENRMHTIKAVMVAALGD.

Carbamoyl phosphate contacts are provided by residues 55–58, Q82, R106, and 133–136; these read STRT and HPTQ. Residues N166, D230, and 234-235 each bind L-ornithine; that span reads SM. Residues 272–273 and R317 contribute to the carbamoyl phosphate site; that span reads CL.

The protein belongs to the aspartate/ornithine carbamoyltransferase superfamily. OTCase family.

The protein localises to the cytoplasm. It carries out the reaction carbamoyl phosphate + L-ornithine = L-citrulline + phosphate + H(+). It functions in the pathway amino-acid biosynthesis; L-arginine biosynthesis; L-arginine from L-ornithine and carbamoyl phosphate: step 1/3. Functionally, reversibly catalyzes the transfer of the carbamoyl group from carbamoyl phosphate (CP) to the N(epsilon) atom of ornithine (ORN) to produce L-citrulline. This is Ornithine carbamoyltransferase from Neisseria meningitidis serogroup C / serotype 2a (strain ATCC 700532 / DSM 15464 / FAM18).